Reading from the N-terminus, the 268-residue chain is tRNA pseudouridine synthase A (268 aa).

Asp52 (nucleophile) is an active-site residue. Residue Tyr113 coordinates substrate.

This sequence belongs to the tRNA pseudouridine synthase TruA family. Homodimer.

It carries out the reaction uridine(38/39/40) in tRNA = pseudouridine(38/39/40) in tRNA. Formation of pseudouridine at positions 38, 39 and 40 in the anticodon stem and loop of transfer RNAs. The protein is tRNA pseudouridine synthase A of Rhizobium leguminosarum bv. trifolii (strain WSM2304).